Consider the following 341-residue polypeptide: Heat-shock protein cognate (HSC) co-chaperone sgt12 (341 aa).

The disordered stretch occupies residues 86 to 123 (PSKEPASAGAQAQSTEAQQPKAGAPTPESDKLKSEGNA). TPR repeat units lie at residues 114-147 (SDKLKSEGNAAMARKEYSKAIDLYTQALSIAPAN), 148-181 (PIYLSNRAAAYSASGQHEKAAEDAELATVVDPKY), and 182-215 (SKAWSRLGLARFDMADYKGAKEAYEKGIEAEGNG). The disordered stretch occupies residues 232–280 (EEANRGAEPPADDVDDAAGASRGAGGMPDLSSLASMLGGRGGGGGGMPD). A compositionally biased stretch (gly residues) spans 269–278 (GGRGGGGGGM).

Belongs to the SGT family. Forms homodimers. Component of the get4/get5/sgt2 sorting complex. Dimers of sgt2 bind directly a single get5. Binds HSC family members ssa1, sse1, hsp104 and hsc82 via its TPR domain.

It is found in the cytoplasm. Its function is as follows. Heat-shock protein cognate (HSC) co-chaperone that preferentially binds endoplasmic reticulum-destined tail-anchored (TA) proteins and directs them to the GET (guided entry of TA proteins) pathway via get4 and get5. Get4 and get5 form an obligate complex that catalyzes the transfer of tail-anchored proteins destined to the endoplasmic reticulum from sgt2 to the cytosolic targeting factor which then targets the TA protein to the ER membrane via get1/get2. This is Heat-shock protein cognate (HSC) co-chaperone sgt12 from Aspergillus fumigatus (strain ATCC MYA-4609 / CBS 101355 / FGSC A1100 / Af293) (Neosartorya fumigata).